Reading from the N-terminus, the 524-residue chain is GMP synthase [glutamine-hydrolyzing] (524 aa).

The Glutamine amidotransferase type-1 domain occupies 5 to 195 (KVIVIDFGGQ…VRGVCGCAGT (191 aa)). The active-site Nucleophile is C82. Active-site residues include H169 and E171. Residues 196-389 (WKMDAFVENT…LGIPEHLVFR (194 aa)) form the GMPS ATP-PPase domain. 223–229 (SGGVDSS) lines the ATP pocket.

In terms of assembly, homodimer.

It carries out the reaction XMP + L-glutamine + ATP + H2O = GMP + L-glutamate + AMP + diphosphate + 2 H(+). It participates in purine metabolism; GMP biosynthesis; GMP from XMP (L-Gln route): step 1/1. Functionally, catalyzes the synthesis of GMP from XMP. The chain is GMP synthase [glutamine-hydrolyzing] from Lachnospira eligens (strain ATCC 27750 / DSM 3376 / VPI C15-48 / C15-B4) (Eubacterium eligens).